The following is an 805-amino-acid chain: Transcription factor E2f1 (805 aa).

3 disordered regions span residues 9–45 (APINNSNSSSSHTTTSSNTQRHQQHQQHYGGSGTTGH), 119–208 (AAAA…LRHD), and 224–255 (PASHHPFSLSTPQQQLAASVASSSSSGDRNRA). Composition is skewed to low complexity over residues 12 to 37 (NNSNSSSSHTTTSSNTQRHQQHQQHY) and 119 to 134 (AAAAATAGHTQQQLQQ). Polar residues-rich tracts occupy residues 144–154 (RKATGKSNDIT) and 181–195 (HHQTVYQKHTASSAP). The PIP-box K+4 motif signature appears at 147-161 (TGKSNDITNYYKVKR). Residues 240 to 249 (AASVASSSSS) show a composition bias toward low complexity. Residues 253-318 (NRADTSLGIL…KKSKNNIQWR (66 aa)) mediate DNA binding. A dimerization region spans residues 318-411 (RCGQSMVSQE…LPNTKLPREI (94 aa)). Serine 434 carries the phosphoserine modification. 2 disordered regions span residues 578–650 (SLTE…QRRS) and 714–743 (GAGANADPHQPYSHDRNSLPPGVADCDANS). 2 stretches are compositionally biased toward low complexity: residues 595-615 (AAAAIAAGSSTTATTTLNSHN) and 623-636 (SNHSNHSSSNNSKS). A compositionally biased stretch (polar residues) spans 637–647 (QPPTIGYGSSQ).

This sequence belongs to the E2F/DP family. Heterodimer of E2f and Dp. Cooperates to give sequence-specific DNA binding and optimal trans-activation. Interacts with PCNA. In terms of processing, ubiquitinated by the DCX(DTL) complex, also named CRL4(CDT2) complex, leading to its degradation during S phase. Ubiquitination by the DCX(DTL) complex is essential for cell cycle control and is PCNA-dependent: interacts with PCNA via its PIP-box, while the presence of the containing the 'K+4' motif in the PIP box, recruit the DCX(DTL) complex, leading to its degradation. As to expression, segmentally repeated expression throughout early embryos is restricted to the ventral nerve cord in later embryos.

It is found in the nucleus. Functionally, transcriptional activator that binds to E2f sites. Required for wild-type growth in mitotic and polytene tissues, Contributes to the expression of replication genes at the G1-S transition and Cyclin E. Activates cell proliferation in wing imaginal disk, which requires expression of vg. This is Transcription factor E2f1 from Drosophila melanogaster (Fruit fly).